The following is a 311-amino-acid chain: MSTFHFSTIVSRTHIFKLMPMIHSLHEHCDDFHLYVLCVDQKAYELLQHVPWEHVTFVQLHEMEDPELLKAKSNRTFHEYCWTLKPAFLFHVMSKWDDAEYFAHMDTDLFFFSDPARIFAENPTASLYLTDHRNSPRFMSYYDRTGRFNTGFVGAGNTKEAYEAVWQWRQDCIEFCTVEMDTERKTYGDQRYVEKWPEQFKGVHVVKSIGANTALWNIENYKVGQKDGRVYIDETPLIFYHFSGFTLVTEKEFNLCWYYRIEDEATIKMIYMPYILNLKRWIDEIQSAFPDFADGFIPKHAVPDTHFIQLD.

This is an uncharacterized protein from Bacillus subtilis (strain 168).